Consider the following 20-residue polypeptide: Non-specific lipid-transfer protein (20 aa).

It belongs to the plant LTP family. As to expression, leaf.

Functionally, plant non-specific lipid-transfer proteins transfer phospholipids as well as galactolipids across membranes. May play a role in wax or cutin deposition in the cell walls of expanding epidermal cells and certain secretory tissues. This chain is Non-specific lipid-transfer protein, found in Cannabis sativa (Hemp).